Here is an 80-residue protein sequence, read N- to C-terminus: Acyl carrier protein (80 aa).

The 76-residue stretch at 4 to 79 (EEIFNKIKDL…DAVSYIKSHQ (76 aa)) folds into the Carrier domain. Ser-39 is modified (O-(pantetheine 4'-phosphoryl)serine).

It belongs to the acyl carrier protein (ACP) family. Post-translationally, 4'-phosphopantetheine is transferred from CoA to a specific serine of apo-ACP by AcpS. This modification is essential for activity because fatty acids are bound in thioester linkage to the sulfhydryl of the prosthetic group.

It is found in the cytoplasm. Its pathway is lipid metabolism; fatty acid biosynthesis. Carrier of the growing fatty acid chain in fatty acid biosynthesis. The chain is Acyl carrier protein from Lactobacillus acidophilus (strain ATCC 700396 / NCK56 / N2 / NCFM).